The primary structure comprises 429 residues: MDPSVTLWQFLLQLLREQGNGHIISWTSRDGGEFKLVDAEEVARLWGLRKNKTNMNYDKLSRALRYYYDKNIIRKVSGQKFVYKFVSYPEVAGCSTEDCPPQPEVSVTSAIAMAPATVHAGPGDTATGKPGTPKGAGMTGQGGLARSSRNEYMRSGLYSTFTIQSLQPQPQPPIPPRPASVLPNTTPAGVPAPASGSRSTSPNPLEACLEAEEAGLPLQVILTPPEAPNQKSEELSLDPSFGHPQPPEVKVEGPKEELEAARAGGFSSEAVKAEPEVSASEGLLARLPAILTENTAQVCGLSTSTTEITQPQKGRKPRDLELPLSPSLLGGQGPERTPGSGTSSGLQAPGPALTPSLLPTHTLTPVLLTPSSLPPSIHFWSTLSPIAPRSPAKLSFQFPSSGSAQVHIPSISVDGLSTPVVLSPGPQKP.

Residues valine 5 to valine 86 constitute a DNA-binding region (ETS). 3 disordered regions span residues histidine 119–arginine 146, serine 165–proline 204, and alanine 227–glycine 253. Over residues glutamine 169–proline 178 the composition is skewed to pro residues. Residues lysine 231, lysine 250, and lysine 255 each participate in a glycyl lysine isopeptide (Lys-Gly) (interchain with G-Cter in SUMO) cross-link. The span at serine 302–glutamine 312 shows a compositional bias: polar residues. Residues serine 302–threonine 354 are disordered. A Phosphoserine; by MAPK1 modification is found at serine 325. 4 positions are modified to phosphothreonine; by MAPK1: threonine 337, threonine 354, threonine 364, and threonine 369. Residues glycine 350–serine 400 form a sufficient for interaction with MAD2L2 region. An O-linked (GlcNAc) threonine glycan is attached at threonine 382. Serine 384 is subject to Phosphoserine; by MAPK1 and MAPK8. A Phosphoserine; by MAPK1 modification is found at serine 390. Threonine 418 carries the post-translational modification Phosphothreonine; by MAPK1. At serine 423 the chain carries Phosphoserine; by MAPK1.

This sequence belongs to the ETS family. As to quaternary structure, interacts in its sumoylated form with PIAS2/PIASX which enhances its transcriptional activator activity. Interacts with MAD2L2; the interaction is direct and promotes phosphorylation by the kinases MAPK8 and/or MAPK9. Interacts with POU1F1. Post-translationally, sumoylation represses transcriptional activator activity as it results in recruitment of HDAC2 to target gene promoters which leads to decreased histone acetylation and reduced transactivator activity. It also regulates nuclear retention. On mitogenic stimulation, phosphorylated on C-terminal serine and threonine residues by MAPK1 but also MAPK8 and/or MAPK9. Phosphorylation leads to loss of sumoylation and restores transcriptional activator activity. Phosphorylated and activated by CaMK4, MAPK11, MAPK12 and MAPK14. Upon bFGF stimulus, phosphorylated by PAK1. Phosphorylated by PRP4K at Thr-418; phosphorylation activation ELK1 transcriptional activity. In terms of tissue distribution, predominantly expressed in the brain, and to a lesser extent in the heart, liver and muscle.

It is found in the nucleus. Its function is as follows. Transcription factor that binds to purine-rich DNA sequences. Forms a ternary complex with SRF and the ETS and SRF motifs of the serum response element (SRE) on the promoter region of immediate early genes such as FOS and IER2. Induces target gene transcription upon JNK and MAPK-signaling pathways stimulation. The protein is ETS domain-containing protein Elk-1 of Mus musculus (Mouse).